A 513-amino-acid chain; its full sequence is ATP synthase subunit alpha (513 aa).

169–176 (GDRQTGKT) contacts ATP.

This sequence belongs to the ATPase alpha/beta chains family. F-type ATPases have 2 components, CF(1) - the catalytic core - and CF(0) - the membrane proton channel. CF(1) has five subunits: alpha(3), beta(3), gamma(1), delta(1), epsilon(1). CF(0) has three main subunits: a(1), b(2) and c(9-12). The alpha and beta chains form an alternating ring which encloses part of the gamma chain. CF(1) is attached to CF(0) by a central stalk formed by the gamma and epsilon chains, while a peripheral stalk is formed by the delta and b chains.

It is found in the cell inner membrane. The catalysed reaction is ATP + H2O + 4 H(+)(in) = ADP + phosphate + 5 H(+)(out). Functionally, produces ATP from ADP in the presence of a proton gradient across the membrane. The alpha chain is a regulatory subunit. This chain is ATP synthase subunit alpha, found in Proteus mirabilis (strain HI4320).